The primary structure comprises 363 residues: 3-methyl-D-ornithine--L-lysine ligase (363 aa).

Lys-10 contributes to the ATP binding site. 11–12 contacts L-lysine; sequence LQ. ATP-binding positions include Asp-31, 49-50, and 72-73; these read DV and EN. Glu-72 serves as a coordination point for L-lysine. Residues Lys-104, Lys-131, Ser-138, and 160–163 each bind ADP; that span reads EEYV. D-ornithine contacts are provided by residues 169–171 and Asp-225; that span reads SLE. Glu-227, Glu-239, and Asp-241 together coordinate Mg(2+). An ADP-binding site is contributed by Glu-239. Residues 243-248 and Glu-302 contribute to the D-ornithine site; that span reads RFPSQT. L-lysine-binding residues include Ser-246 and Glu-302.

It belongs to the PylC family. Mg(2+) serves as cofactor.

It catalyses the reaction (3R)-3-methyl-D-ornithine + L-lysine + ATP = (3R)-3-methyl-D-ornithyl-N(6)-L-lysine + ADP + phosphate + H(+). Its pathway is amino-acid biosynthesis; L-pyrrolysine biosynthesis. In terms of biological role, is required for the biosynthesis of pyrrolysine. Catalyzes the ATP-dependent ligation between (3R)-3-methyl-D-ornithine and L-lysine, leading to (3R)-3-methyl-D-ornithyl-N6-L-lysine. The sequence is that of 3-methyl-D-ornithine--L-lysine ligase from Methanosarcina barkeri (strain Fusaro / DSM 804).